We begin with the raw amino-acid sequence, 178 residues long: 2-C-methyl-D-erythritol 2,4-cyclodiphosphate synthase (178 aa).

A divalent metal cation is bound by residues Asp24, His26, and His61. 24 to 26 is a 4-CDP-2-C-methyl-D-erythritol 2-phosphate binding site; that stretch reads DSH. Residue 150 to 153 coordinates 4-CDP-2-C-methyl-D-erythritol 2-phosphate; sequence TSGE.

Belongs to the IspF family. Homotrimer. A divalent metal cation is required as a cofactor.

It carries out the reaction 4-CDP-2-C-methyl-D-erythritol 2-phosphate = 2-C-methyl-D-erythritol 2,4-cyclic diphosphate + CMP. Its pathway is isoprenoid biosynthesis; isopentenyl diphosphate biosynthesis via DXP pathway; isopentenyl diphosphate from 1-deoxy-D-xylulose 5-phosphate: step 4/6. In terms of biological role, involved in the biosynthesis of isopentenyl diphosphate (IPP) and dimethylallyl diphosphate (DMAPP), two major building blocks of isoprenoid compounds. Catalyzes the conversion of 4-diphosphocytidyl-2-C-methyl-D-erythritol 2-phosphate (CDP-ME2P) to 2-C-methyl-D-erythritol 2,4-cyclodiphosphate (ME-CPP) with a corresponding release of cytidine 5-monophosphate (CMP). In Chlamydia trachomatis serovar L2 (strain ATCC VR-902B / DSM 19102 / 434/Bu), this protein is 2-C-methyl-D-erythritol 2,4-cyclodiphosphate synthase.